Reading from the N-terminus, the 1457-residue chain is Eye-specific diacylglycerol kinase (1457 aa).

Disordered stretches follow at residues 1 to 123 (MQQQ…SSEA), 136 to 177 (RSHS…PPCI), and 207 to 339 (YSNT…QPTT). 3 stretches are compositionally biased toward low complexity: residues 22–62 (SATT…LRTT), 98–115 (SQRASSSLLKQQSSSSAS), and 141–154 (DSATASAGSDDSGT). The segment covering 214 to 253 (ASEDEDEVEGHNAEEEEEGSAAIEDAEEETTEAATEEADE) has biased composition (acidic residues). Residues 254 to 266 (DPRTEVESEHDHD) show a composition bias toward basic and acidic residues. The segment covering 294 to 303 (RLPRQMRRHT) has biased composition (basic residues). 2 Phorbol-ester/DAG-type zinc fingers span residues 591–641 (HYWK…TLAC) and 661–724 (HHWV…GEEC). Residues 758–799 (NNAASGSGGGGAGGGAGGGGGKSKKQTQRRQKGKEEKKEPRA) form a disordered region. Gly residues predominate over residues 763-778 (GSGGGGAGGGAGGGGG). A compositionally biased stretch (basic residues) spans 779–789 (KSKKQTQRRQK). The 137-residue stretch at 808 to 944 (PEVIPVIVFI…MDRWRVKVTP (137 aa)) folds into the DAGKc domain. Residues 1264–1302 (TPDQERSFAAFSQRQAQNERRQMDQAQGRGPGSTDEDLQ) are disordered. ANK repeat units lie at residues 1320 to 1349 (QTSDAILLAAQSGDLNMLRALHEQGYSLQS), 1353 to 1382 (NGQTALHFACKYNHRDIVKYIIASATRRLI), 1389 to 1418 (LGQTALHIAAEQNRRDICVMLVAAGAHLDT), and 1422 to 1451 (GGNTPMMVAFNKNANEIATYLESKQGTQPV).

The protein belongs to the eukaryotic diacylglycerol kinase family. In terms of tissue distribution, expressed specifically in adult eye.

It is found in the membrane. It catalyses the reaction a 1,2-diacyl-sn-glycerol + ATP = a 1,2-diacyl-sn-glycero-3-phosphate + ADP + H(+). Functionally, required for the maintenance of phospholipid turnover within the photoreceptor. The chain is Eye-specific diacylglycerol kinase (rdgA) from Drosophila melanogaster (Fruit fly).